The sequence spans 291 residues: Asialoglycoprotein receptor 1 (291 aa).

Residues 1-19 (MTKECQDLQHLDNEESDHH) show a composition bias toward basic and acidic residues. The tract at residues 1 to 27 (MTKECQDLQHLDNEESDHHQLRKGPPP) is disordered. Over 1 to 40 (MTKECQDLQHLDNEESDHHQLRKGPPPSQPLLQRLCSGPR) the chain is Cytoplasmic. Positions 5–8 (CQDL) match the Endocytosis signal motif. S16 is modified (phosphoserine). C36 is lipidated: S-palmitoyl cysteine. A helical; Signal-anchor for type II membrane protein membrane pass occupies residues 41 to 61 (LLLLSLGLSLLLLVVVCVIGS). Positions 61-123 (SQNSQLQKEL…KDLSEDHSSL (63 aa)) form a coiled coil. At 62–291 (QNSQLQKELR…DKASQEPPLL (230 aa)) the chain is on the extracellular side. N79 and N147 each carry an N-linked (GlcNAc...) asparagine glycan. Cystine bridges form between C154/C165, C182/C277, and C255/C269. The region spanning 161–278 (HERSCYWFSR…CQRPYRWVCE (118 aa)) is the C-type lectin domain. Ca(2+) is bound by residues V191, E197, D216, Q240, D242, D243, E253, D254, N265, D266, and E278. A Phosphoserine modification is found at S285.

Interacts with LASS2. Post-translationally, phosphorylated on a cytoplasmic Ser residue.

The protein resides in the membrane. Functionally, mediates the endocytosis of plasma glycoproteins to which the terminal sialic acid residue on their complex carbohydrate moieties has been removed. The receptor recognizes terminal galactose and N-acetylgalactosamine units. After ligand binding to the receptor, the resulting complex is internalized and transported to a sorting organelle, where receptor and ligand are disassociated. The receptor then returns to the cell membrane surface. The polypeptide is Asialoglycoprotein receptor 1 (ASGR1) (Pongo abelii (Sumatran orangutan)).